Consider the following 336-residue polypeptide: Cyclin-H1-1 (336 aa).

Position 2 is an N-acetylalanine (Ala2). The segment at 297–336 (KSCLGHSSSHDESKKREKRSKHKSHRSSNDTPNGAPPPIG) is disordered. The segment covering 312–322 (REKRSKHKSHR) has biased composition (basic residues).

Belongs to the cyclin family. In terms of assembly, interacts with CDKA-1, CDKD-2 and CDKD-3, but not CDKD-1 and CDKF-1.

The protein resides in the cytoplasm. The protein localises to the nucleus. Associates with CDK-2 and CDK-3 and activates the CDK kinases. The sequence is that of Cyclin-H1-1 (CYCH1-1) from Arabidopsis thaliana (Mouse-ear cress).